The primary structure comprises 354 residues: MERFLTKMPIKSKANEVPKKEAVAKKETPKVARKATKKDTPKELKDKENAGDDNTPKQTKGRPGRPAAKRKNLDTPDVKDEKIAMEEENPPKRRSSRLTRSTRSMAEDGSPSPEKEKPEKLPFIKYKGAIKYFTESQDIAASADDVLQWVEKQKDDVVPMAFDMEWPFSFQTGPGKSSVIQICVDEKCCYIYQLTNVKKLPAALVALINHPKVRLHGVNIKNDFRKLARDFPEVTAEPLIEKCVDLGLWCNEVCETGGRWSLERLTNFIAKKAMDKSKKVRMSKWHVIPLDENQLMYAAIDVYIGQVIYRELERREKVKIKNEEEFKEKNGDAAFKAMKTLGETFLTKINEVTL.

The segment at 1 to 120 (MERFLTKMPI…PSPEKEKPEK (120 aa)) is disordered. 2 stretches are compositionally biased toward basic and acidic residues: residues 13 to 30 (KANEVPKKEAVAKKETPK) and 37 to 50 (KKDTPKELKDKENA). Basic residues predominate over residues 59 to 70 (TKGRPGRPAAKR). A compositionally biased stretch (basic and acidic residues) spans 71 to 91 (KNLDTPDVKDEKIAMEEENPP). Phosphoserine occurs at positions 104, 110, and 112. The 166-residue stretch at 149 to 314 (WVEKQKDDVV…GQVIYRELER (166 aa)) folds into the 3'-5' exonuclease domain. 3 residues coordinate Mg(2+): aspartate 163, glutamate 165, and aspartate 301.

This sequence belongs to the WRNexo family.

It localises to the nucleus. In terms of biological role, has exonuclease activity on both single-stranded and duplex templates bearing overhangs, but not blunt ended duplex DNA, and cleaves in a 3'-5' direction. Essential for the formation of DNA replication focal centers. Has an important role in maintaining genome stability. The sequence is that of 3'-5' exonuclease from Drosophila simulans (Fruit fly).